The sequence spans 631 residues: 2-isopropylmalate synthase 2, chloroplastic (631 aa).

The N-terminal 46 residues, 1–46, are a transit peptide targeting the chloroplast; sequence MESSILKSPNLSSPSFGVPSIPALSSSSTSPFSSLHLRSQNHRTIS. The Pyruvate carboxyltransferase domain maps to 87-360; sequence VRIFDTTLRD…FTGIDTRHIV (274 aa). 3 residues coordinate a divalent metal cation: D96, H293, and N329.

This sequence belongs to the alpha-IPM synthase/homocitrate synthase family. LeuA type 1 subfamily. In terms of assembly, homotetramer. Mg(2+) serves as cofactor. The cofactor is Mn(2+). In terms of tissue distribution, expressed in roots, stems, leaves, flowers and siliques.

It is found in the plastid. The protein localises to the chloroplast. It carries out the reaction 3-methyl-2-oxobutanoate + acetyl-CoA + H2O = (2S)-2-isopropylmalate + CoA + H(+). The protein operates within amino-acid biosynthesis; L-leucine biosynthesis; L-leucine from 3-methyl-2-oxobutanoate: step 1/4. Its activity is regulated as follows. Feedback inhibition by Leu. Functionally, catalyzes the condensation of the acetyl group of acetyl-CoA with 3-methyl-2-oxobutanoate (2-oxoisovalerate) to form 3-carboxy-3-hydroxy-4-methylpentanoate (2-isopropylmalate). Involved in Leu biosynthesis, but does not participate in the chain elongation of glucosinolates. This Arabidopsis thaliana (Mouse-ear cress) protein is 2-isopropylmalate synthase 2, chloroplastic.